A 199-amino-acid chain; its full sequence is Thymidylate kinase (199 aa).

7 to 14 is an ATP binding site; it reads GIDGSGKS.

Belongs to the thymidylate kinase family.

The catalysed reaction is dTMP + ATP = dTDP + ADP. Functionally, phosphorylation of dTMP to form dTDP in both de novo and salvage pathways of dTTP synthesis. In Thermosipho melanesiensis (strain DSM 12029 / CIP 104789 / BI429), this protein is Thymidylate kinase.